We begin with the raw amino-acid sequence, 525 residues long: GMP synthase [glutamine-hydrolyzing] (525 aa).

The region spanning 8–206 (PLLILDFGSQ…VVDICKAPTE (199 aa)) is the Glutamine amidotransferase type-1 domain. The active-site Nucleophile is C85. Catalysis depends on residues H180 and E182. The GMPS ATP-PPase domain maps to 207-400 (WTPEHIIDEA…LGLPHDMVYR (194 aa)). 234–240 (SGGVDSS) is an ATP binding site.

In terms of assembly, homodimer.

It catalyses the reaction XMP + L-glutamine + ATP + H2O = GMP + L-glutamate + AMP + diphosphate + 2 H(+). It participates in purine metabolism; GMP biosynthesis; GMP from XMP (L-Gln route): step 1/1. Catalyzes the synthesis of GMP from XMP. This Legionella pneumophila (strain Corby) protein is GMP synthase [glutamine-hydrolyzing].